The sequence spans 252 residues: Trans-aconitate 2-methyltransferase (252 aa).

Belongs to the methyltransferase superfamily. Tam family.

It localises to the cytoplasm. The catalysed reaction is trans-aconitate + S-adenosyl-L-methionine = (E)-3-(methoxycarbonyl)pent-2-enedioate + S-adenosyl-L-homocysteine. In terms of biological role, catalyzes the S-adenosylmethionine monomethyl esterification of trans-aconitate. This Escherichia coli (strain 55989 / EAEC) protein is Trans-aconitate 2-methyltransferase.